A 126-amino-acid polypeptide reads, in one-letter code: Small ribosomal subunit protein uS8 (126 aa).

Belongs to the universal ribosomal protein uS8 family. In terms of assembly, part of the 30S ribosomal subunit. Contacts proteins S5 and S12.

One of the primary rRNA binding proteins, it binds directly to 16S rRNA central domain where it helps coordinate assembly of the platform of the 30S subunit. The sequence is that of Small ribosomal subunit protein uS8 from Oleidesulfovibrio alaskensis (strain ATCC BAA-1058 / DSM 17464 / G20) (Desulfovibrio alaskensis).